A 101-amino-acid polypeptide reads, in one-letter code: Protein Tat (101 aa).

The segment at 1–24 is interaction with human CREBBP; the sequence is MEPVDPRLEPWKHPGSQPKTACTN. The segment at 1–48 is transactivation; sequence MEPVDPRLEPWKHPGSQPKTACTNCYCKKCCFHCQVCFITKGLGISYG. Zn(2+) contacts are provided by C22, C25, and C27. A cysteine-rich region spans residues 22-37; it reads CTNCYCKKCCFHCQVC. K28 bears the N6-acetyllysine; by host PCAF mark. Positions 30, 33, 34, and 37 each coordinate Zn(2+). Positions 38–48 are core; it reads FITKGLGISYG. The segment covering 48–57 has biased composition (basic residues); sequence GRKKRRQRRR. The tract at residues 48–101 is disordered; the sequence is GRKKRRQRRRAPPDSEVHQVSLPKQPASQPQGDPTGPKESKKKVERETETDPVH. The Nuclear localization signal, RNA-binding (TAR), and protein transduction signature appears at 49–57; that stretch reads RKKRRQRRR. Residues 49–86 are interaction with the host capping enzyme RNGTT; sequence RKKRRQRRRAPPDSEVHQVSLPKQPASQPQGDPTGPKE. N6-acetyllysine; by host EP300 and GCN5L2 occurs at positions 50 and 51. An asymmetric dimethylarginine; by host PRMT6 mark is found at R52 and R53. K71 participates in a covalent cross-link: Glycyl lysine isopeptide (Lys-Gly) (interchain with G-Cter in ubiquitin). The segment covering 83–101 has biased composition (basic and acidic residues); it reads GPKESKKKVERETETDPVH.

It belongs to the lentiviruses Tat family. Interacts with host CCNT1. Associates with the P-TEFb complex composed at least of Tat, P-TEFb (CDK9 and CCNT1), TAR RNA, RNA Pol II. Recruits the HATs CREBBP, TAF1/TFIID, EP300, PCAF and GCN5L2. Interacts with host KAT5/Tip60; this interaction targets the latter to degradation. Interacts with the host deacetylase SIRT1. Interacts with host capping enzyme RNGTT; this interaction stimulates RNGTT. Binds to host KDR, and to the host integrins ITGAV/ITGB3 and ITGA5/ITGB1. Interacts with host KPNB1/importin beta-1 without previous binding to KPNA1/importin alpha-1. Interacts with EIF2AK2. Interacts with host nucleosome assembly protein NAP1L1; this interaction may be required for the transport of Tat within the nucleus, since the two proteins interact at the nuclear rim. Interacts with host C1QBP/SF2P32; this interaction involves lysine-acetylated Tat. Interacts with the host chemokine receptors CCR2, CCR3 and CXCR4. Interacts with host DPP4/CD26; this interaction may trigger an anti-proliferative effect. Interacts with host LDLR. Interacts with the host extracellular matrix metalloproteinase MMP1. Interacts with host PRMT6; this interaction mediates Tat's methylation. Interacts with, and is ubiquitinated by MDM2/Hdm2. Interacts with host PSMC3 and HTATIP2. Interacts with STAB1; this interaction may overcome SATB1-mediated repression of IL2 and IL2RA (interleukin) in T cells by binding to the same domain than HDAC1. Interacts (when acetylated) with human CDK13, thereby increasing HIV-1 mRNA splicing and promoting the production of the doubly spliced HIV-1 protein Nef. Interacts with host TBP; this interaction modulates the activity of transcriptional pre-initiation complex. Interacts with host RELA. Interacts with host PLSCR1; this interaction negatively regulates Tat transactivation activity by altering its subcellular distribution. Post-translationally, asymmetrical arginine methylation by host PRMT6 seems to diminish the transactivation capacity of Tat and affects the interaction with host CCNT1. Acetylation by EP300, CREBBP, GCN5L2/GCN5 and PCAF regulates the transactivation activity of Tat. EP300-mediated acetylation of Lys-50 promotes dissociation of Tat from the TAR RNA through the competitive binding to PCAF's bromodomain. In addition, the non-acetylated Tat's N-terminus can also interact with PCAF. PCAF-mediated acetylation of Lys-28 enhances Tat's binding to CCNT1. Lys-50 is deacetylated by SIRT1. In terms of processing, polyubiquitination by host MDM2 does not target Tat to degradation, but activates its transactivation function and fosters interaction with CCNT1 and TAR RNA. Post-translationally, phosphorylated by EIF2AK2 on serine and threonine residues adjacent to the basic region important for TAR RNA binding and function. Phosphorylation of Tat by EIF2AK2 is dependent on the prior activation of EIF2AK2 by dsRNA.

Its subcellular location is the host nucleus. The protein localises to the host nucleolus. It localises to the host cytoplasm. It is found in the secreted. Its function is as follows. Transcriptional activator that increases RNA Pol II processivity, thereby increasing the level of full-length viral transcripts. Recognizes a hairpin structure at the 5'-LTR of the nascent viral mRNAs referred to as the transactivation responsive RNA element (TAR) and recruits the cyclin T1-CDK9 complex (P-TEFb complex) that will in turn hyperphosphorylate the RNA polymerase II to allow efficient elongation. The CDK9 component of P-TEFb and other Tat-activated kinases hyperphosphorylate the C-terminus of RNA Pol II that becomes stabilized and much more processive. Other factors such as HTATSF1/Tat-SF1, SUPT5H/SPT5, and HTATIP2 are also important for Tat's function. Besides its effect on RNA Pol II processivity, Tat induces chromatin remodeling of proviral genes by recruiting the histone acetyltransferases (HATs) CREBBP, EP300 and PCAF to the chromatin. This also contributes to the increase in proviral transcription rate, especially when the provirus integrates in transcriptionally silent region of the host genome. To ensure maximal activation of the LTR, Tat mediates nuclear translocation of NF-kappa-B by interacting with host RELA. Through its interaction with host TBP, Tat may also modulate transcription initiation. Tat can reactivate a latently infected cell by penetrating in it and transactivating its LTR promoter. In the cytoplasm, Tat is thought to act as a translational activator of HIV-1 mRNAs. Extracellular circulating Tat can be endocytosed by surrounding uninfected cells via the binding to several surface receptors such as CD26, CXCR4, heparan sulfate proteoglycans (HSPG) or LDLR. Neurons are rarely infected, but they internalize Tat via their LDLR. Through its interaction with nuclear HATs, Tat is potentially able to control the acetylation-dependent cellular gene expression. Modulates the expression of many cellular genes involved in cell survival, proliferation or in coding for cytokines or cytokine receptors. Tat plays a role in T-cell and neurons apoptosis. Tat induced neurotoxicity and apoptosis probably contribute to neuroAIDS. Circulating Tat also acts as a chemokine-like and/or growth factor-like molecule that binds to specific receptors on the surface of the cells, affecting many cellular pathways. In the vascular system, Tat binds to ITGAV/ITGB3 and ITGA5/ITGB1 integrins dimers at the surface of endothelial cells and competes with bFGF for heparin-binding sites, leading to an excess of soluble bFGF. This Human immunodeficiency virus type 1 group M subtype B (isolate SF162) (HIV-1) protein is Protein Tat.